The following is an 80-amino-acid chain: Defensin-like protein 13 (80 aa).

Residues Met-1–Ala-29 form the signal peptide. Gln-30 is subject to Pyrrolidone carboxylic acid. Intrachain disulfides connect Cys-33–Cys-80, Cys-44–Cys-65, Cys-50–Cys-74, and Cys-54–Cys-76.

Belongs to the DEFL family. As to quaternary structure, forms oligomers in its native state. As to expression, expressed predominantly in siliques and dry seeds.

The protein localises to the secreted. Functionally, confers broad-spectrum resistance to pathogens. Possesses antifungal activity sensitive to inorganic cations in vitro. This is Defensin-like protein 13 (PDF1.1) from Arabidopsis thaliana (Mouse-ear cress).